Consider the following 335-residue polypeptide: Probable cytosolic iron-sulfur protein assembly protein Ciao1 (335 aa).

7 WD repeats span residues 12-51, 57-96, 101-140, 146-185, 192-231, 250-289, and 301-335; these read GHKG…WSTK, GHKR…FECN, GHEN…EFEC, PHTQ…NDWD, SHTS…NTAG, QHSR…KPDE, and AHDQ…KVSE.

It belongs to the WD repeat CIA1 family.

In terms of biological role, essential component of the cytosolic iron-sulfur (Fe/S) protein assembly machinery. Required for the maturation of extramitochondrial Fe/S proteins. The polypeptide is Probable cytosolic iron-sulfur protein assembly protein Ciao1 (Drosophila simulans (Fruit fly)).